Consider the following 839-residue polypeptide: Periplasmic nitrate reductase (839 aa).

The segment at residues 1-34 (MTLTRRDFIKANAAAAAATAAAVNLPLVPSMAQA) is a signal peptide (tat-type signal). The 4Fe-4S Mo/W bis-MGD-type domain occupies 46 to 102 (IKWDKAACRFCGTGCSVLVGTKGGRVVATQGDPDAPVNRGLNCIKGYFLSKIMYGED). Cysteine 53, cysteine 56, cysteine 60, and cysteine 88 together coordinate [4Fe-4S] cluster. Mo-bis(molybdopterin guanine dinucleotide) is bound by residues lysine 90, glutamine 157, asparagine 182, cysteine 186, 219-226 (WGSNMAEM), 250-254 (STYEH), 269-271 (QTD), methionine 379, glutamine 383, asparagine 489, 515-516 (SD), lysine 538, aspartate 565, and 729-738 (TGRVLEHWHT). Phenylalanine 805 contributes to the substrate binding site. The Mo-bis(molybdopterin guanine dinucleotide) site is built by asparagine 813 and lysine 830.

The protein belongs to the prokaryotic molybdopterin-containing oxidoreductase family. NasA/NapA/NarB subfamily. As to quaternary structure, component of the periplasmic nitrate reductase NapAB complex composed of NapA and NapB. The cofactor is [4Fe-4S] cluster. Mo-bis(molybdopterin guanine dinucleotide) serves as cofactor. Post-translationally, predicted to be exported by the Tat system. The position of the signal peptide cleavage has not been experimentally proven.

The protein resides in the periplasm. It carries out the reaction 2 Fe(II)-[cytochrome] + nitrate + 2 H(+) = 2 Fe(III)-[cytochrome] + nitrite + H2O. Functionally, catalytic subunit of the periplasmic nitrate reductase complex NapAB. Receives electrons from NapB and catalyzes the reduction of nitrate to nitrite. In Laribacter hongkongensis (strain HLHK9), this protein is Periplasmic nitrate reductase.